The chain runs to 270 residues: Glutamate racemase (270 aa).

Residues 14–15 and 46–47 contribute to the substrate site; these read DS and YG. The active-site Proton donor/acceptor is C77. 78–79 serves as a coordination point for substrate; the sequence is NT. C189 serves as the catalytic Proton donor/acceptor. 190 to 191 contributes to the substrate binding site; that stretch reads TH.

The protein belongs to the aspartate/glutamate racemases family.

The enzyme catalyses L-glutamate = D-glutamate. The protein operates within cell wall biogenesis; peptidoglycan biosynthesis. Functionally, provides the (R)-glutamate required for cell wall biosynthesis. This chain is Glutamate racemase, found in Neisseria gonorrhoeae (strain ATCC 700825 / FA 1090).